The primary structure comprises 124 residues: Fluoride-specific ion channel FluC (124 aa).

4 helical membrane passes run 1-21, 36-56, 66-86, and 94-114; these read MAYL…HFIN, TFFI…YLAF, LFLM…SLDA, and AVGL…AGLF. 2 residues coordinate Na(+): G74 and T77.

It belongs to the fluoride channel Fluc/FEX (TC 1.A.43) family.

It is found in the cell inner membrane. It catalyses the reaction fluoride(in) = fluoride(out). With respect to regulation, na(+) is not transported, but it plays an essential structural role and its presence is essential for fluoride channel function. Its function is as follows. Fluoride-specific ion channel. Important for reducing fluoride concentration in the cell, thus reducing its toxicity. The sequence is that of Fluoride-specific ion channel FluC from Rhodopseudomonas palustris (strain ATCC BAA-98 / CGA009).